The following is a 558-amino-acid chain: Arginine--tRNA ligase (558 aa).

The short motif at 119–129 (PNIAKPMSMGH) is the 'HIGH' region element.

The protein belongs to the class-I aminoacyl-tRNA synthetase family. As to quaternary structure, monomer.

It localises to the cytoplasm. The catalysed reaction is tRNA(Arg) + L-arginine + ATP = L-arginyl-tRNA(Arg) + AMP + diphosphate. This Lactobacillus johnsonii (strain CNCM I-12250 / La1 / NCC 533) protein is Arginine--tRNA ligase.